Consider the following 117-residue polypeptide: Iron-sulfur cluster insertion protein ErpA (117 aa).

The iron-sulfur cluster site is built by Cys-45, Cys-109, and Cys-111.

This sequence belongs to the HesB/IscA family. In terms of assembly, homodimer. Iron-sulfur cluster is required as a cofactor.

Required for insertion of 4Fe-4S clusters for at least IspG. The protein is Iron-sulfur cluster insertion protein ErpA of Blochmanniella pennsylvanica (strain BPEN).